A 196-amino-acid chain; its full sequence is ATP-dependent Clp protease proteolytic subunit (196 aa).

The Nucleophile role is filled by S99. The active site involves H124.

The protein belongs to the peptidase S14 family. Fourteen ClpP subunits assemble into 2 heptameric rings which stack back to back to give a disk-like structure with a central cavity, resembling the structure of eukaryotic proteasomes.

The protein localises to the cytoplasm. The catalysed reaction is Hydrolysis of proteins to small peptides in the presence of ATP and magnesium. alpha-casein is the usual test substrate. In the absence of ATP, only oligopeptides shorter than five residues are hydrolyzed (such as succinyl-Leu-Tyr-|-NHMec, and Leu-Tyr-Leu-|-Tyr-Trp, in which cleavage of the -Tyr-|-Leu- and -Tyr-|-Trp bonds also occurs).. Its function is as follows. Cleaves peptides in various proteins in a process that requires ATP hydrolysis. Has a chymotrypsin-like activity. Plays a major role in the degradation of misfolded proteins. This Helicobacter pylori (strain ATCC 700392 / 26695) (Campylobacter pylori) protein is ATP-dependent Clp protease proteolytic subunit.